The sequence spans 505 residues: Kinesin light chain 3 (505 aa).

Positions 1 to 20 are disordered; that stretch reads MSVQVAAPGSTGLGPERLNP. A coiled-coil region spans residues 90–150; that stretch reads ALSAHVGVLE…EEEKSHLQFL (61 aa). Residues 154 to 197 form a disordered region; that stretch reads RQYDPPEESQRPDSPPRRDSLASLFPSEEEEKKGPEAAGAAAAQ. Basic and acidic residues predominate over residues 161–173; the sequence is ESQRPDSPPRRDS. S173 bears the Phosphoserine mark. TPR repeat units lie at residues 207–240, 249–282, 291–324, 333–366, and 375–408; these read LRTLHNLVIQYASQGRYEVAVPLCRQALEDLERS, ATMLNILALVYRDQNKYKEATELLHDALQIREQT, AATLNNLAVLYGKRGRYREAEPLCQRALEIREKV, AKQLNNLALLCQNQGKFQDVERHYARALSIYEAL, and AKTKNNLASAYLKQNKYQQAEELYKEILSQEALP. A disordered region spans residues 409–439; that stretch reads APLGAPQGGTAGEAQQQVLRRSSSFSKLRES. A compositionally biased stretch (polar residues) spans 421–434; that stretch reads EAQQQVLRRSSSFS. S467 is subject to Phosphoserine. The disordered stretch occupies residues 486 to 505; that stretch reads QHLNEASRTLSASTQDLSPR. T499 carries the post-translational modification Phosphothreonine. Phosphoserine is present on S503.

It belongs to the kinesin light chain family. In terms of assembly, oligomer composed of two heavy chains and two light chains. Associates with microtubulin in an ATP-dependent manner. Interacts with KIF5C. Interacts with ODF1. Interacts with LRGUK. Interacts with VDAC2. Expressed in postmeiotic male germ cells (at protein level).

It localises to the cytoplasm. Its subcellular location is the cytoskeleton. The protein resides in the mitochondrion. Functionally, kinesin is a microtubule-associated force-producing protein that may play a role in organelle transport. Plays a role during spermiogenesis in the development of the sperm tail midpiece and in the normal function of spermatozoa. May play a role in the formation of the mitochondrial sheath formation in the developing spermatid midpiece. The sequence is that of Kinesin light chain 3 (Klc3) from Rattus norvegicus (Rat).